A 285-amino-acid chain; its full sequence is CCR4-NOT transcription complex subunit 7 (285 aa).

A divalent metal cation contacts are provided by Asp40, Glu42, Asp161, Asp230, and Glu278.

It belongs to the CAF1 family. In terms of assembly, component of the CCR4-NOT complex; distinct complexes seem to exist that differ in the participation of probably mutually exclusive catalytic subunits; the complex contains two deadenylase subunits, CNOT6 or CNOT6L, and CNOT7 or CNOT8. In the complex, interacts directly with CNOT1. Interacts with AGO2. Interacts with TOB1; recruited by TOB1 to a ternary complex with CPEB3 which is required for mRNA deadenylation and decay. Interacts with BTG1. Interacts with BTG2. Interacts with NANOS2. Interacts with ZFP36, ZFP36L1 and ZFP36L2; these interactions are inhibited in response to phorbol 12-myristate 13-acetate (PMA) treatment in a p38 MAPK-dependent manner. Interacts with BTG4. Interacts with EIF4E; this interaction is increased by CNOT7 interaction with BTG4. It depends on Mn(2+) as a cofactor. The cofactor is Mg(2+). Requires Co(2+) as cofactor.

It localises to the nucleus. Its subcellular location is the cytoplasm. It is found in the P-body. The protein resides in the cytoplasmic ribonucleoprotein granule. The catalysed reaction is Exonucleolytic cleavage of poly(A) to 5'-AMP.. Its function is as follows. Has 3'-5' poly(A) exoribonuclease activity for synthetic poly(A) RNA substrate. Its function seems to be partially redundant with that of CNOT8. Catalytic component of the CCR4-NOT complex which is one of the major cellular mRNA deadenylases and is linked to various cellular processes including bulk mRNA degradation, miRNA-mediated repression, translational repression during translational initiation and general transcription regulation. During miRNA-mediated repression the complex also seems to act as translational repressor during translational initiation. Additional complex functions may be a consequence of its influence on mRNA expression. Required for miRNA-mediated mRNA deadenylation. Associates with members of the BTG family such as TOB1 and BTG2 and is required for their anti-proliferative activity. In Bos taurus (Bovine), this protein is CCR4-NOT transcription complex subunit 7 (CNOT7).